A 299-amino-acid polypeptide reads, in one-letter code: Release factor glutamine methyltransferase (299 aa).

S-adenosyl-L-methionine-binding positions include 134–138, Asp-157, Trp-186, and Asn-203; that span reads GTGSG. 203 to 206 provides a ligand contact to substrate; it reads NPPY.

The protein belongs to the protein N5-glutamine methyltransferase family. PrmC subfamily.

The enzyme catalyses L-glutaminyl-[peptide chain release factor] + S-adenosyl-L-methionine = N(5)-methyl-L-glutaminyl-[peptide chain release factor] + S-adenosyl-L-homocysteine + H(+). Functionally, methylates the class 1 translation termination release factors RF1/PrfA and RF2/PrfB on the glutamine residue of the universally conserved GGQ motif. The protein is Release factor glutamine methyltransferase of Synechocystis sp. (strain ATCC 27184 / PCC 6803 / Kazusa).